The chain runs to 516 residues: Acetylcholine receptor subunit delta (516 aa).

The first 21 residues, 1 to 21, serve as a signal peptide directing secretion; that stretch reads MEGSVLTLVLLAALVVCGSWG. Over 22-244 the chain is Extracellular; it reads LNEEERLIRH…VTFYLIIRRK (223 aa). N96 and N163 each carry an N-linked (GlcNAc...) asparagine glycan. C150 and C164 are disulfide-bonded. Helical transmembrane passes span 245-269, 279-296, and 311-332; these read PLFY…VFYL, MAIS…LISK, and FLLF…VLNI. Over 333 to 470 the chain is Cytoplasmic; that stretch reads HFRTPSTHVL…WNRVARTVDR (138 aa). Y389 is subject to Phosphotyrosine; by Tyr-kinases. Residues 471 to 493 form a helical membrane-spanning segment; sequence LCLFVVTPIMVVGTAWIFLQGAY.

The protein belongs to the ligand-gated ion channel (TC 1.A.9) family. Acetylcholine receptor (TC 1.A.9.1) subfamily. Delta/CHRND sub-subfamily. In terms of assembly, pentamer of two alpha chains, and one each of the beta, delta, and gamma (in immature muscle) or epsilon (in mature muscle) chains. The muscle heteropentamer composed of alpha-1, beta-1, delta, epsilon subunits interacts with the alpha-conotoxin ImII.

The protein localises to the postsynaptic cell membrane. It localises to the cell membrane. The enzyme catalyses K(+)(in) = K(+)(out). It catalyses the reaction Na(+)(in) = Na(+)(out). In terms of biological role, after binding acetylcholine, the AChR responds by an extensive change in conformation that affects all subunits and leads to opening of an ion-conducting channel across the plasma membrane. The sequence is that of Acetylcholine receptor subunit delta (CHRND) from Bos taurus (Bovine).